The chain runs to 267 residues: Large ribosomal subunit protein uL4 (267 aa).

The protein belongs to the universal ribosomal protein uL4 family. In terms of assembly, part of the 50S ribosomal subunit.

One of the primary rRNA binding proteins, this protein initially binds near the 5'-end of the 23S rRNA. It is important during the early stages of 50S assembly. It makes multiple contacts with different domains of the 23S rRNA in the assembled 50S subunit and ribosome. Its function is as follows. Forms part of the polypeptide exit tunnel. In Saccharolobus islandicus (strain Y.N.15.51 / Yellowstone #2) (Sulfolobus islandicus), this protein is Large ribosomal subunit protein uL4.